The sequence spans 634 residues: uncharacterized protein (634 aa).

A signal peptide spans 1-40 (MWLQQRLKGLPGLLSSSWARRLLCLLGLLVLLLWFAGSGA). The Extracellular segment spans residues 41–589 (RRAAGGLQLL…DEHMAQQDPG (549 aa)). A glycan (N-linked (GlcNAc...) asparagine) is linked at asparagine 363. Residues 590-610 (LPFLFWFSVASLITLFHLFLF) form a helical membrane-spanning segment. At 611-634 (KLIYNEYCGPGAKPFFRNKEDPSV) the chain is on the cytoplasmic side.

The protein resides in the membrane. This is an uncharacterized protein from Bos taurus (Bovine).